We begin with the raw amino-acid sequence, 316 residues long: Carbamate kinase-like protein YahI (316 aa).

Belongs to the carbamate kinase family.

The chain is Carbamate kinase-like protein YahI (yahI) from Escherichia coli (strain K12).